Reading from the N-terminus, the 79-residue chain is Acyl carrier protein (79 aa).

In terms of domain architecture, Carrier spans 2–77; sequence SEIGERVKKI…DAVKFLEKNA (76 aa). Serine 37 carries the post-translational modification O-(pantetheine 4'-phosphoryl)serine.

The protein belongs to the acyl carrier protein (ACP) family. In terms of processing, 4'-phosphopantetheine is transferred from CoA to a specific serine of apo-ACP by AcpS. This modification is essential for activity because fatty acids are bound in thioester linkage to the sulfhydryl of the prosthetic group.

Its subcellular location is the cytoplasm. It functions in the pathway lipid metabolism; fatty acid biosynthesis. Functionally, carrier of the growing fatty acid chain in fatty acid biosynthesis. This is Acyl carrier protein from Rhodopseudomonas palustris (strain BisA53).